The following is a 144-amino-acid chain: D-aminoacyl-tRNA deacylase (144 aa).

The Gly-cisPro motif, important for rejection of L-amino acids motif lies at 136–137; it reads GP.

This sequence belongs to the DTD family. As to quaternary structure, homodimer.

The protein localises to the cytoplasm. It catalyses the reaction glycyl-tRNA(Ala) + H2O = tRNA(Ala) + glycine + H(+). The enzyme catalyses a D-aminoacyl-tRNA + H2O = a tRNA + a D-alpha-amino acid + H(+). Its function is as follows. An aminoacyl-tRNA editing enzyme that deacylates mischarged D-aminoacyl-tRNAs. Also deacylates mischarged glycyl-tRNA(Ala), protecting cells against glycine mischarging by AlaRS. Acts via tRNA-based rather than protein-based catalysis; rejects L-amino acids rather than detecting D-amino acids in the active site. By recycling D-aminoacyl-tRNA to D-amino acids and free tRNA molecules, this enzyme counteracts the toxicity associated with the formation of D-aminoacyl-tRNA entities in vivo and helps enforce protein L-homochirality. This chain is D-aminoacyl-tRNA deacylase, found in Aliivibrio fischeri (strain MJ11) (Vibrio fischeri).